A 365-amino-acid polypeptide reads, in one-letter code: Transcription factor aptf-1 (365 aa).

Disordered regions lie at residues 13–40 and 93–126; these read EFVR…PFYE and TPPQ…SNYS. Residues 223-356 are H-S-H (helix-span-helix), dimerization; sequence RRKQANVTAW…MIDESIKYID (134 aa).

It belongs to the AP-2 family. Binds DNA as a dimer. Expressed in five interneurons AIB, RIB and RIS.

Its subcellular location is the nucleus. Functionally, transcription factor, which is required in the single sleep-active ring interneuron RIS for sleep-like behavioral quiescence induced by neuropeptide signaling in larvae. Regulates gene expression of sleep-inducing FMRFamide-like neuropeptide flp-11 in RIS. The chain is Transcription factor aptf-1 from Caenorhabditis elegans.